We begin with the raw amino-acid sequence, 143 residues long: ATP synthase subunit b' (143 aa).

A helical transmembrane segment spans residues 6-26; it reads ATLPVMALQFILLAVILNAVF.

Belongs to the ATPase B chain family. As to quaternary structure, F-type ATPases have 2 components, F(1) - the catalytic core - and F(0) - the membrane proton channel. F(1) has five subunits: alpha(3), beta(3), gamma(1), delta(1), epsilon(1). F(0) has four main subunits: a(1), b(1), b'(1) and c(10-14). The alpha and beta chains form an alternating ring which encloses part of the gamma chain. F(1) is attached to F(0) by a central stalk formed by the gamma and epsilon chains, while a peripheral stalk is formed by the delta, b and b' chains.

Its subcellular location is the cellular thylakoid membrane. Its function is as follows. F(1)F(0) ATP synthase produces ATP from ADP in the presence of a proton or sodium gradient. F-type ATPases consist of two structural domains, F(1) containing the extramembraneous catalytic core and F(0) containing the membrane proton channel, linked together by a central stalk and a peripheral stalk. During catalysis, ATP synthesis in the catalytic domain of F(1) is coupled via a rotary mechanism of the central stalk subunits to proton translocation. Functionally, component of the F(0) channel, it forms part of the peripheral stalk, linking F(1) to F(0). The b'-subunit is a diverged and duplicated form of b found in plants and photosynthetic bacteria. The protein is ATP synthase subunit b' of Microcystis aeruginosa (strain NIES-843 / IAM M-2473).